A 628-amino-acid polypeptide reads, in one-letter code: MALVSAVPLDSRLCLCRTLFGLTHELKAIRRTIPNLGMCRGGKSIAPSMSMSSTTFVSSEDGVPRRIGGHHSNLWDDDSIDSLSTSYEAPSYRERADRLIGEVKDMFHLISVEDGVSTSPLNDLHHRLWMVDSVERLGIDRHFKNETNAALDHVYSYWTEKGIGRGRESGATDLNSTALGLRTLRLHGYMVSSHVLDHFKNEKGQFACSAIQTDGEIRDVLNLFRASLIAFPGEKIMEEAEMFSTMFLKDALQKIPPSGLSQEIEYLLEFGWHTNLPRMETRMYIDVFGEDTTFETPYLIRERLLELAKLEFNIFHSLVKRELQSLSRWWKDYGFPEITFSRHRHVEYYTLAACIANDPKHSAFRLGFAKICHMVTILDDIYDTFGTMEELELLTAAFKRWDPSSIECLPDYMKGVYMAVYDNINETAREAQKIQGWDIVSYARKSWEALFDAHMQEARWISSGYLPTFEEYLENGKVSFGSRLTTLEPMLTLGFPLSPRILQEIDFPSNFNELICAILRLRGDTQCYKADMARGEEASSVSCYMKDHPGITEEDAVNQINALVNNLTKELNWELLRPDSGVPISYKKFYFDIWRVFHYGYKYRDGFSVASIEIKNLVTRTVVETVPL.

The Mg(2+) site is built by aspartate 379, aspartate 383, and aspartate 531. Residues 379–383 carry the DDXXD motif motif; that stretch reads DDIYD.

Belongs to the terpene synthase family. Tpsd subfamily. Mg(2+) serves as cofactor. Mn(2+) is required as a cofactor.

Its subcellular location is the plastid. It localises to the chloroplast. It participates in terpene metabolism; oleoresin biosynthesis. It functions in the pathway secondary metabolite biosynthesis; terpenoid biosynthesis. Monoterpene synthase (TPS) involved in the biosynthesis of monoterpene natural products included in conifer oleoresin secretions and volatile emissions; these compounds contribute to biotic and abiotic stress defense against herbivores and pathogens. The sequence is that of Monoterpene synthase like 1, chloroplastic from Pinus banksiana (Jack pine).